The primary structure comprises 288 residues: 4-hydroxybenzoate octaprenyltransferase (288 aa).

Helical transmembrane passes span isoleucine 23–isoleucine 43, alanine 46–valine 66, isoleucine 98–threonine 118, leucine 141–valine 161, glutamate 163–tyrosine 183, leucine 213–methionine 233, asparagine 234–glutamine 254, and alanine 268–tryptophan 288.

This sequence belongs to the UbiA prenyltransferase family. It depends on Mg(2+) as a cofactor.

The protein localises to the cell inner membrane. It carries out the reaction all-trans-octaprenyl diphosphate + 4-hydroxybenzoate = 4-hydroxy-3-(all-trans-octaprenyl)benzoate + diphosphate. It participates in cofactor biosynthesis; ubiquinone biosynthesis. Its function is as follows. Catalyzes the prenylation of para-hydroxybenzoate (PHB) with an all-trans polyprenyl group. Mediates the second step in the final reaction sequence of ubiquinone-8 (UQ-8) biosynthesis, which is the condensation of the polyisoprenoid side chain with PHB, generating the first membrane-bound Q intermediate 3-octaprenyl-4-hydroxybenzoate. The protein is 4-hydroxybenzoate octaprenyltransferase of Yersinia pestis bv. Antiqua (strain Antiqua).